Reading from the N-terminus, the 389-residue chain is Major outer membrane porin (389 aa).

An N-terminal signal peptide occupies residues 1 to 23; it reads MKKLLKSALLSAAFAGSVGSLQA.

This sequence belongs to the chlamydial porin (CP) (TC 1.B.2) family. In terms of assembly, part of a disulfide cross-linked outer membrane complex (COMC) composed of the major outer membrane porin (MOMP), the small cysteine-rich protein (OmcA) and the large cysteine-rich periplasmic protein (OmcB).

Its subcellular location is the cell outer membrane. In elementary bodies (EBs, the infectious stage, which is able to survive outside the host cell) provides the structural integrity of the outer envelope through disulfide cross-links with the small cysteine-rich protein and the large cysteine-rich periplasmic protein. It has been described in publications as the Sarkosyl-insoluble COMC (Chlamydia outer membrane complex), and serves as the functional equivalent of peptidoglycan. In terms of biological role, permits diffusion of specific solutes through the outer membrane. This is Major outer membrane porin (ompA) from Chlamydia pneumoniae (Chlamydophila pneumoniae).